The following is a 273-amino-acid chain: NADPH-dependent 7-cyano-7-deazaguanine reductase (273 aa).

81-83 (VES) lines the substrate pocket. 83–84 (SK) is an NADPH binding site. Cysteine 179 (thioimide intermediate) is an active-site residue. Aspartate 186 functions as the Proton donor in the catalytic mechanism. 218–219 (AE) is a substrate binding site. 247-248 (RG) is a binding site for NADPH.

This sequence belongs to the GTP cyclohydrolase I family. QueF type 2 subfamily. In terms of assembly, homodimer.

It localises to the cytoplasm. It catalyses the reaction 7-aminomethyl-7-carbaguanine + 2 NADP(+) = 7-cyano-7-deazaguanine + 2 NADPH + 3 H(+). The protein operates within tRNA modification; tRNA-queuosine biosynthesis. Catalyzes the NADPH-dependent reduction of 7-cyano-7-deazaguanine (preQ0) to 7-aminomethyl-7-deazaguanine (preQ1). This chain is NADPH-dependent 7-cyano-7-deazaguanine reductase, found in Rickettsia akari (strain Hartford).